The chain runs to 274 residues: 2,3,4,5-tetrahydropyridine-2,6-dicarboxylate N-succinyltransferase (274 aa).

The substrate site is built by Arg-106 and Asp-143.

Belongs to the transferase hexapeptide repeat family. In terms of assembly, homotrimer.

It is found in the cytoplasm. It carries out the reaction (S)-2,3,4,5-tetrahydrodipicolinate + succinyl-CoA + H2O = (S)-2-succinylamino-6-oxoheptanedioate + CoA. Its pathway is amino-acid biosynthesis; L-lysine biosynthesis via DAP pathway; LL-2,6-diaminopimelate from (S)-tetrahydrodipicolinate (succinylase route): step 1/3. The chain is 2,3,4,5-tetrahydropyridine-2,6-dicarboxylate N-succinyltransferase from Rickettsia felis (strain ATCC VR-1525 / URRWXCal2) (Rickettsia azadi).